The chain runs to 167 residues: Protein-export protein SecB (167 aa).

It belongs to the SecB family. Homotetramer, a dimer of dimers. One homotetramer interacts with 1 SecA dimer.

It is found in the cytoplasm. Functionally, one of the proteins required for the normal export of preproteins out of the cell cytoplasm. It is a molecular chaperone that binds to a subset of precursor proteins, maintaining them in a translocation-competent state. It also specifically binds to its receptor SecA. The protein is Protein-export protein SecB of Wolbachia sp. subsp. Brugia malayi (strain TRS).